Reading from the N-terminus, the 211-residue chain is Probable chemoreceptor glutamine deamidase CheD (211 aa).

The protein belongs to the CheD family.

The enzyme catalyses L-glutaminyl-[protein] + H2O = L-glutamyl-[protein] + NH4(+). Probably deamidates glutamine residues to glutamate on methyl-accepting chemotaxis receptors (MCPs), playing an important role in chemotaxis. In Hahella chejuensis (strain KCTC 2396), this protein is Probable chemoreceptor glutamine deamidase CheD.